Reading from the N-terminus, the 429-residue chain is Adenylosuccinate synthetase (429 aa).

Residues 12–18 (GDEGKGK) and 40–42 (GHT) each bind GTP. Asp13 functions as the Proton acceptor in the catalytic mechanism. Mg(2+) is bound by residues Asp13 and Gly40. IMP-binding positions include 13-16 (DEGK), 38-41 (NAGH), Thr128, Arg142, Gln223, Thr238, and Arg302. The Proton donor role is filled by His41. 298–304 (VNTGRPR) contributes to the substrate binding site. GTP contacts are provided by residues Arg304, 330-332 (KLD), and 412-414 (GVG).

The protein belongs to the adenylosuccinate synthetase family. As to quaternary structure, homodimer. Requires Mg(2+) as cofactor.

It localises to the cytoplasm. It carries out the reaction IMP + L-aspartate + GTP = N(6)-(1,2-dicarboxyethyl)-AMP + GDP + phosphate + 2 H(+). Its pathway is purine metabolism; AMP biosynthesis via de novo pathway; AMP from IMP: step 1/2. Functionally, plays an important role in the de novo pathway of purine nucleotide biosynthesis. Catalyzes the first committed step in the biosynthesis of AMP from IMP. This chain is Adenylosuccinate synthetase, found in Renibacterium salmoninarum (strain ATCC 33209 / DSM 20767 / JCM 11484 / NBRC 15589 / NCIMB 2235).